Reading from the N-terminus, the 642-residue chain is Nucleolar GTP-binding protein 1 (642 aa).

The OBG-type G domain occupies 168 to 340 (RTLLICGYPN…VRNKACEKLL (173 aa)). GTP contacts are provided by residues 174-181 (GYPNVGKS), 220-224 (DTPGI), and 288-291 (NKTD). Positions 585 to 642 (MDGVADASMRSKADRMAKLHRRERNRQARQGEADRHATASLPKHLFSGKRGIGSNDRR) are disordered. Over residues 609 to 621 (NRQARQGEADRHA) the composition is skewed to basic and acidic residues.

It belongs to the TRAFAC class OBG-HflX-like GTPase superfamily. OBG GTPase family. NOG subfamily.

Its subcellular location is the nucleus. It is found in the nucleolus. Its function is as follows. Involved in the biogenesis of the 60S ribosomal subunit. This chain is Nucleolar GTP-binding protein 1 (NOG1), found in Eremothecium gossypii (strain ATCC 10895 / CBS 109.51 / FGSC 9923 / NRRL Y-1056) (Yeast).